A 186-amino-acid polypeptide reads, in one-letter code: Probable GTP-binding protein EngB (186 aa).

In terms of domain architecture, EngB-type G spans 18–186 (DKVEICFIGR…LKKLLASEFK (169 aa)). GTP is bound by residues 26–33 (GRSNVGKS), 52–56 (GRTQL), 70–73 (DLPG), 137–140 (TKID), and 166–168 (VSS). Mg(2+) is bound by residues serine 33 and threonine 54.

The protein belongs to the TRAFAC class TrmE-Era-EngA-EngB-Septin-like GTPase superfamily. EngB GTPase family. Requires Mg(2+) as cofactor.

Its function is as follows. Necessary for normal cell division and for the maintenance of normal septation. The chain is Probable GTP-binding protein EngB from Mycoplasmopsis pulmonis (strain UAB CTIP) (Mycoplasma pulmonis).